Here is a 955-residue protein sequence, read N- to C-terminus: Aminopeptidase A (955 aa).

The Cytoplasmic segment spans residues 1-17 (MDIEDKSSKMHCMKGKH). A helical; Signal-anchor for type II membrane protein transmembrane segment spans residues 18-38 (VAIICGVVIAVGLILGLGLGL). Residues 39–955 (GLKPEACNPP…LENSEQPNFV (917 aa)) are Extracellular-facing. A disordered region spans residues 49–69 (EDNGLLSTKPPTTSTPNVTNP). Residues 55–69 (STKPPTTSTPNVTNP) show a composition bias toward low complexity. Asparagine 65, asparagine 118, and asparagine 192 each carry an N-linked (GlcNAc...) asparagine glycan. Glutamate 218 provides a ligand contact to substrate. Residues asparagine 312, asparagine 319, and asparagine 335 are each glycosylated (N-linked (GlcNAc...) asparagine). 352–356 (GAMEN) provides a ligand contact to substrate. Histidine 388 lines the Zn(2+) pocket. The Proton acceptor role is filled by glutamate 389. 2 residues coordinate Zn(2+): histidine 392 and glutamate 411. Asparagine 458, asparagine 547, asparagine 584, asparagine 592, asparagine 647, asparagine 674, asparagine 681, asparagine 759, asparagine 766, asparagine 823, and asparagine 836 each carry an N-linked (GlcNAc...) asparagine glycan. Arginine 882 is a substrate binding site.

Belongs to the peptidase M1 family. In terms of assembly, homodimer; disulfide-linked. Requires Zn(2+) as cofactor.

It is found in the cell membrane. It carries out the reaction Release of N-terminal glutamate (and to a lesser extent aspartate) from a peptide.. Its activity is regulated as follows. The partially purified protein is inhibited by the aminopeptidase competitive inhibitors amastatin (Leu and acidic inhibitor), and bestatin (Leu inhibitor), by chelating agents EDTA, and 1,10-Phenanthroline, as well as by Zn(2+) ions. Substrate specificity is modulated by Ca(2+), Ba(2+), and Mn(2+) ions which enhances the enzymatic activity for cleavage of acidic residues. Its function is as follows. Venom protein that cleaves N-terminal acidic residues from peptides with high potency in presence of calcium. It may have several roles in venom including alteration of blood pressure by cleaving circulating angiotensin-2, general degradation of host tissue, increase of permeability to other venom components, and/or processing of other toxins in the venom. In Gloydius brevicauda (Korean slamosa snake), this protein is Aminopeptidase A.